A 1456-amino-acid polypeptide reads, in one-letter code: ABC transporter G family member 44 (1456 aa).

An ABC transporter 1 domain is found at 169–442 (ANLLHVVPNK…FESMGFKCPD (274 aa)). Residue 202 to 209 (GPPGSGKT) coordinates ATP. The ABC transmembrane type-2 1 domain maps to 520 to 733 (ELLRTCIARE…AMNAIAVNEF (214 aa)). The next 6 helical transmembrane spans lie at 538-558 (FVYR…MTLF), 571-591 (GIVY…NGFS), 626-646 (IPIS…VIGF), 658-678 (LLLL…AALG), 682-702 (VVAN…SGFI), and 768-788 (IGVG…TIAL). The tract at residues 812 to 844 (NITGETINDPRNSASSGQTTNTRRNAAPGEASE) is disordered. A compositionally biased stretch (polar residues) spans 814 to 835 (TGETINDPRNSASSGQTTNTRR). In terms of domain architecture, ABC transporter 2 spans 858-1110 (VAFNNIRYSV…DLIEYFEGVE (253 aa)). 903–910 (GVSGAGKT) provides a ligand contact to ATP. The ABC transmembrane type-2 2 domain maps to 1183-1397 (TQCMACLWKQ…TLYGLVASQF (215 aa)). A run of 7 helical transmembrane segments spans residues 1202 to 1222 (YTVV…TIFW), 1242 to 1262 (YAAV…VVAV), 1290 to 1310 (LPYV…MIGF), 1317 to 1337 (FFWY…YGML), 1347 to 1367 (IASI…GFVI), 1378 to 1398 (WYSW…SQFG), and 1425 to 1445 (FLGV…VSFS).

Belongs to the ABC transporter superfamily. ABCG family. PDR (TC 3.A.1.205) subfamily.

Its subcellular location is the membrane. Functionally, may be a general defense protein. The protein is ABC transporter G family member 44 of Oryza sativa subsp. japonica (Rice).